The sequence spans 677 residues: UvrABC system protein B (677 aa).

The Helicase ATP-binding domain occupies 25 to 412; it reads QGVNGGERYQ…GGEVAQQVIR (388 aa). 38 to 45 contacts ATP; the sequence is GATGTGKT. The Beta-hairpin signature appears at 91–114; sequence YYDYYQPEAYVPVSDTYIAKTASI. Residues 429-591 enclose the Helicase C-terminal domain; that stretch reads QVDDLLGEIR…IVPTAAGKKA (163 aa). The UVR domain occupies 639 to 674; sequence PELIDQLEGKMKEAAKKLDFEDAANLRDRIKQLRQK.

Belongs to the UvrB family. As to quaternary structure, forms a heterotetramer with UvrA during the search for lesions. Interacts with UvrC in an incision complex.

It is found in the cytoplasm. In terms of biological role, the UvrABC repair system catalyzes the recognition and processing of DNA lesions. A damage recognition complex composed of 2 UvrA and 2 UvrB subunits scans DNA for abnormalities. Upon binding of the UvrA(2)B(2) complex to a putative damaged site, the DNA wraps around one UvrB monomer. DNA wrap is dependent on ATP binding by UvrB and probably causes local melting of the DNA helix, facilitating insertion of UvrB beta-hairpin between the DNA strands. Then UvrB probes one DNA strand for the presence of a lesion. If a lesion is found the UvrA subunits dissociate and the UvrB-DNA preincision complex is formed. This complex is subsequently bound by UvrC and the second UvrB is released. If no lesion is found, the DNA wraps around the other UvrB subunit that will check the other stand for damage. In Parasynechococcus marenigrum (strain WH8102), this protein is UvrABC system protein B.